Reading from the N-terminus, the 339-residue chain is Pre-mRNA-splicing factor syf2 (339 aa).

The tract at residues 1 to 136 is disordered; the sequence is MPPEKKRKTE…LQSDPSQLTA (136 aa). Over residues 7-16 the composition is skewed to basic and acidic residues; it reads RKTEPEDKAE. Over residues 17 to 37 the composition is skewed to polar residues; the sequence is VTQQENDVAESTTEPNNQTVT. The segment covering 45 to 93 has biased composition (low complexity); the sequence is VTEAALATTSSSSPPVLSASETAQPDTAATSQSSSTPPTSTSAAESAAA. The span at 94-103 shows a compositional bias: basic and acidic residues; the sequence is KARERAERFR. Polar residues predominate over residues 126–135; it reads RLQSDPSQLT.

Belongs to the SYF2 family. In terms of assembly, associated with the spliceosome.

The protein localises to the nucleus. In terms of biological role, involved in pre-mRNA splicing. This chain is Pre-mRNA-splicing factor syf2 (msp-4), found in Neurospora crassa (strain ATCC 24698 / 74-OR23-1A / CBS 708.71 / DSM 1257 / FGSC 987).